The primary structure comprises 867 residues: Zinc finger protein zfp-1 (867 aa).

The segment at 5 to 57 (VGGCCVCADENGWTDNPLIYCDGENCEVAVHQGCYGIQEVPEGEWFCAKCTKA) adopts a PHD-type 1 zinc-finger fold. The C2HC pre-PHD-type 2 zinc-finger motif lies at 69–102 (TFCCQLCPFDYGALKKTDRNGWAHVICALYIPEV). The tract at residues 69–186 (TFCCQLCPFD…KYCGYCENHL (118 aa)) is extended PHD2 domain (ePHD2). A PHD-type 2 zinc finger spans residues 125 to 186 (KLCYICNEER…KYCGYCENHL (62 aa)). 4 disordered regions span residues 267-311 (GSTV…SLSS), 440-477 (KNDM…GKSP), 503-586 (ADRT…QSNR), and 753-773 (SSGA…STAG). The segment covering 285–311 (PLTTSSRSSVAQDPSPPLTINKNSLSS) has biased composition (polar residues). The segment covering 503 to 512 (ADRTAAERRA) has biased composition (basic and acidic residues). Residues 516–527 (QSQPSTSTNGGP) show a composition bias toward polar residues. Over residues 538–550 (HTNSTNSTNHQNN) the composition is skewed to low complexity. Polar residues predominate over residues 551–573 (GLTQNAPASTSMQAGTSSNDGVI). Positions 574-585 (SQNGTSSTSQSN) are enriched in low complexity. Polar residues predominate over residues 758–771 (VNSNIQNHRATPST).

Multimer; in vitro. Interacts (via C-terminus) with dot-1.1 to form a heterodimer known as the zfp-1-dot-1.1 complex or DotCom complex. In terms of tissue distribution, isoform a: Expressed at high levels in maturing oocytes, but at low levels in the rest of the germ line (at protein level). Isoform a: Not expressed in the pharynx, germ line and tail. Isoform c: Not expressed in the germ line (at protein level). Isoform c: Uniformly expressed.

The protein localises to the nucleus. It localises to the chromosome. Its function is as follows. Recruits the histone methyltransferase dot-1.1 to chromatin to methylate 'Lys-79' of histone H3 and activate transcription. Recognizes and binds histone H3 methylated at 'Lys-4' (H3K4me) at the promoters of target genes. During stress, the zfp-1-dot-1.1 complex also plays a role in the deubiquitination of histone H2B sites, which negatively modulates the RNA polymerase II-induced transcription of highly expressed genes. In response to stress, binds to the pdk-1 promoter to negatively regulate pdk-1 expression, which negatively modulates daf-16/FOXO-mediated gene expression. Thus, most likely via this mechanism, in response to stress, it confers a protective role against neuronal necrosis. Plays a role in Insulin/IGF-1-like signaling (IIS)- and diet restriction-mediated lifespan extension by controlling daf-16/FOXO and pha-4/FOXA recruitment to target promoters. May negatively regulate the expression of genes required for vulval development. May play a role in axon guidance in D-type motor neurons. May suppress sensitivity to RNAi. Functionally, required for migration of HSN motor neurons during embryogenesis. This is Zinc finger protein zfp-1 from Caenorhabditis elegans.